The chain runs to 70 residues: Large ribosomal subunit protein eL38 (70 aa).

Belongs to the eukaryotic ribosomal protein eL38 family.

This chain is Large ribosomal subunit protein eL38 (RpL38), found in Anopheles gambiae (African malaria mosquito).